The chain runs to 37 residues: Islet amyloid polypeptide (37 aa).

A disulfide bond links C2 and C7. Position 37 is a tyrosine amide (Y37).

Belongs to the calcitonin family. Can form homodimers. Interacts with IDE and INS. Interaction with INS inhibits homodimerization and fibril formation.

The protein localises to the secreted. Functionally, amylin/IAPP is a glucoregulatory peptide hormone that plays an important role in the regulation of energy homeostasis. Selectively inhibits insulin-stimulated glucose utilization and glycogen deposition in muscle, while not affecting adipocyte glucose metabolism. IAPP function is mediated by the CALCR-RAMPs (AMYRs) receptor complexes. Amylin can also bind CALCR receptor in the absence of RAMPs, although it is more selective for AMYRs. The protein is Islet amyloid polypeptide (IAPP) of Cricetulus griseus (Chinese hamster).